Reading from the N-terminus, the 100-residue chain is Urease subunit gamma (100 aa).

This sequence belongs to the urease gamma subunit family. As to quaternary structure, heterotrimer of UreA (gamma), UreB (beta) and UreC (alpha) subunits. Three heterotrimers associate to form the active enzyme.

Its subcellular location is the cytoplasm. The catalysed reaction is urea + 2 H2O + H(+) = hydrogencarbonate + 2 NH4(+). The protein operates within nitrogen metabolism; urea degradation; CO(2) and NH(3) from urea (urease route): step 1/1. In Aliivibrio fischeri (strain ATCC 700601 / ES114) (Vibrio fischeri), this protein is Urease subunit gamma.